The primary structure comprises 1347 residues: Spermatogenesis-associated protein 31A3 (1347 aa).

The helical transmembrane segment at 23–43 (PWVLDIFLTLVFALGFFFLLL) threads the bilayer. 8 disordered regions span residues 55–87 (PSPS…GREC), 108–142 (HLDK…HEPM), 154–235 (SPDP…STLI), 373–397 (EQDT…GPQK), 627–658 (QDES…EAQK), 900–955 (RGIP…REAV), 1084–1161 (VHEE…PSVS), and 1313–1335 (KAVS…SHHH). Basic residues predominate over residues 60 to 82 (GKRKCPVGRRRRPRGRMKNHSLR). A compositionally biased stretch (polar residues) spans 165–178 (LASTPSPGPMTTSV). The span at 198 to 211 (PEPPALFPHPPHTP) shows a compositional bias: pro residues. Composition is skewed to polar residues over residues 627–651 (QDES…STGE) and 927–948 (LTYS…SSKA). 2 stretches are compositionally biased toward basic and acidic residues: residues 1108 to 1127 (HKSE…RLEG) and 1137 to 1146 (RKTEDTHQDE).

Belongs to the SPATA31 family.

Its subcellular location is the membrane. May play a role in spermatogenesis. In Homo sapiens (Human), this protein is Spermatogenesis-associated protein 31A3 (SPATA31A3).